The chain runs to 430 residues: Adenylosuccinate synthetase (430 aa).

GTP-binding positions include 12 to 18 (GDEGKGK) and 40 to 42 (GHT). Asp13 (proton acceptor) is an active-site residue. Mg(2+) contacts are provided by Asp13 and Gly40. Residues 13 to 16 (DEGK), 38 to 41 (NAGH), Thr130, Arg144, Gln224, and Thr239 each bind IMP. The active-site Proton donor is the His41. Residues 277 to 298 (PFPTEQDNETGRKIGERGREFG) are disordered. Over residues 285-296 (ETGRKIGERGRE) the composition is skewed to basic and acidic residues. 299-305 (TNTGRPR) is a substrate binding site. Residue Arg303 coordinates IMP. Residues Arg305, 331–333 (KLD), and 413–415 (STS) each bind GTP.

The protein belongs to the adenylosuccinate synthetase family. Homodimer. It depends on Mg(2+) as a cofactor.

The protein resides in the cytoplasm. It catalyses the reaction IMP + L-aspartate + GTP = N(6)-(1,2-dicarboxyethyl)-AMP + GDP + phosphate + 2 H(+). It participates in purine metabolism; AMP biosynthesis via de novo pathway; AMP from IMP: step 1/2. Functionally, plays an important role in the de novo pathway of purine nucleotide biosynthesis. Catalyzes the first committed step in the biosynthesis of AMP from IMP. This is Adenylosuccinate synthetase from Bradyrhizobium sp. (strain BTAi1 / ATCC BAA-1182).